The sequence spans 1132 residues: DNA-directed RNA polymerase subunit beta (1132 aa).

It belongs to the RNA polymerase beta chain family. The RNAP catalytic core consists of 2 alpha, 1 beta, 1 beta' and 1 omega subunit. When a sigma factor is associated with the core the holoenzyme is formed, which can initiate transcription.

It catalyses the reaction RNA(n) + a ribonucleoside 5'-triphosphate = RNA(n+1) + diphosphate. Its function is as follows. DNA-dependent RNA polymerase catalyzes the transcription of DNA into RNA using the four ribonucleoside triphosphates as substrates. In Carboxydothermus hydrogenoformans (strain ATCC BAA-161 / DSM 6008 / Z-2901), this protein is DNA-directed RNA polymerase subunit beta.